A 573-amino-acid chain; its full sequence is ESX-1 secretion system protein EccA1 (573 aa).

334 to 341 (GPPGTGKT) is an ATP binding site.

It belongs to the CbxX/CfxQ family. In terms of assembly, part of the ESX-1 / type VII secretion system (T7SS), which is composed of cytosolic and membrane components.

The protein resides in the cytoplasm. Functionally, part of the ESX-1 / type VII specialized secretion system (T7SS), which exports several proteins including EsxA and EsxB. EccA1 exhibits ATPase activity and may provide energy for the export of ESX-1 substrates. The chain is ESX-1 secretion system protein EccA1 from Mycobacterium leprae (strain TN).